A 65-amino-acid polypeptide reads, in one-letter code: Gene 51 protein (65 aa).

In Mycobacterium phage D29 (Mycobacteriophage D29), this protein is Gene 51 protein (51).